We begin with the raw amino-acid sequence, 160 residues long: Transmembrane protein 220 (160 aa).

A run of 5 helical transmembrane segments spans residues 3 to 23 (PALWRACNGLMAAFFALAALV), 30 to 50 (AEVWVVVYTIPAVLTLLVGLN), 62 to 82 (ISAIHILFCTVWAVGLASYLL), 100 to 120 (GLVIITAWIILCHSSSKNPVG), and 125 to 145 (LAIAIVITLFPFISWVYIYIN).

The protein localises to the membrane. The protein is Transmembrane protein 220 (TMEM220) of Homo sapiens (Human).